A 241-amino-acid chain; its full sequence is MADS-box transcription factor 57 (241 aa).

Residues 1–61 (MGRGKIVIRR…GRLYEFSSTN (61 aa)) form the MADS-box domain. A K-box domain is found at 85 to 178 (IKIWQREAAS…LNVMSQQKLE (94 aa)). The disordered stretch occupies residues 216 to 241 (LELSQSQQREGECSKTAAPELGLHLP).

As to quaternary structure, interacts with TB1. As to expression, expressed in seedling roots and shoots. Highly expressed in young leaves.

The protein localises to the nucleus. Transcriptional factor that targets the CArG motif 5'-C(A/T)TTAAAAAG-3' in the promoter of D14. Directly suppresses D14 expression to control the outgrowth of axillary buds. The protein is MADS-box transcription factor 57 of Oryza sativa subsp. japonica (Rice).